The chain runs to 553 residues: Nucleoside-diphosphatase mig-23 (553 aa).

Residues 1-8 are Cytoplasmic-facing; the sequence is MRVSRRFT. A helical transmembrane segment spans residues 9–29; the sequence is ILAITAMIFLSLIICIYAVAA. At 30–489 the chain is on the lumenal side; it reads HTTVNVILQK…IVKETHSASE (460 aa). Residue glutamate 174 is the Proton acceptor of the active site. Asparagine 190 and asparagine 284 each carry an N-linked (GlcNAc...) asparagine glycan. Residues 490–510 form a helical membrane-spanning segment; the sequence is SLWAPLFFLSAVFCLFVLVCA. The Cytoplasmic portion of the chain corresponds to 511–553; that stretch reads KEHSLLCFDDKRRASFGLTRRQYSYKMLKEDRTSSSAFLENFA.

Belongs to the GDA1/CD39 NTPase family.

Its subcellular location is the golgi apparatus membrane. It carries out the reaction a ribonucleoside 5'-diphosphate + H2O = a ribonucleoside 5'-phosphate + phosphate + H(+). Seems to be able to hydrolyze ADP, UDP and GDP. Supports mig-17 glycosylation and surface expression, which is required for proper migration of distal tip cells during gonad morphogenesis. The chain is Nucleoside-diphosphatase mig-23 from Caenorhabditis briggsae.